The following is a 1045-amino-acid chain: Probable beta-glucosidase E (1045 aa).

Positions 1 to 74 are disordered; sequence MAPPDSTHGG…SGSYQLRPVD (74 aa). The Cytoplasmic portion of the chain corresponds to 1 to 163; the sequence is MAPPDSTHGG…PVKYARIWWR (163 aa). Residues 11 to 20 show a composition bias toward basic and acidic residues; the sequence is SFRDHLKTND. The helical; Signal-anchor for type II membrane protein transmembrane segment at 164–184 threads the bilayer; it reads TLLAVIVTLAVVVWGFLSFAV. Residues 185 to 1045 lie on the Extracellular side of the membrane; it reads SHREEPKVWP…SRDLPLMGEY (861 aa). N-linked (GlcNAc...) asparagine glycosylation is found at N226, N234, and N402. Residue D430 is part of the active site. N473, N512, N577, N893, N902, and N988 each carry an N-linked (GlcNAc...) asparagine glycan.

It belongs to the glycosyl hydrolase 3 family.

Its subcellular location is the cell membrane. The enzyme catalyses Hydrolysis of terminal, non-reducing beta-D-glucosyl residues with release of beta-D-glucose.. It participates in glycan metabolism; cellulose degradation. Beta-glucosidases are one of a number of cellulolytic enzymes involved in the degradation of cellulosic biomass. Catalyzes the last step releasing glucose from the inhibitory cellobiose. The protein is Probable beta-glucosidase E (bglE) of Neosartorya fischeri (strain ATCC 1020 / DSM 3700 / CBS 544.65 / FGSC A1164 / JCM 1740 / NRRL 181 / WB 181) (Aspergillus fischerianus).